The chain runs to 391 residues: Mannonate dehydratase (391 aa).

It belongs to the mannonate dehydratase family. Fe(2+) is required as a cofactor. Mn(2+) serves as cofactor.

It catalyses the reaction D-mannonate = 2-dehydro-3-deoxy-D-gluconate + H2O. Its pathway is carbohydrate metabolism; pentose and glucuronate interconversion. Its function is as follows. Catalyzes the dehydration of D-mannonate. This chain is Mannonate dehydratase, found in Marinomonas sp. (strain MWYL1).